The chain runs to 247 residues: Phosphoribosylaminoimidazole-succinocarboxamide synthase (247 aa).

This sequence belongs to the SAICAR synthetase family.

It carries out the reaction 5-amino-1-(5-phospho-D-ribosyl)imidazole-4-carboxylate + L-aspartate + ATP = (2S)-2-[5-amino-1-(5-phospho-beta-D-ribosyl)imidazole-4-carboxamido]succinate + ADP + phosphate + 2 H(+). It participates in purine metabolism; IMP biosynthesis via de novo pathway; 5-amino-1-(5-phospho-D-ribosyl)imidazole-4-carboxamide from 5-amino-1-(5-phospho-D-ribosyl)imidazole-4-carboxylate: step 1/2. The chain is Phosphoribosylaminoimidazole-succinocarboxamide synthase from Methanopyrus kandleri (strain AV19 / DSM 6324 / JCM 9639 / NBRC 100938).